The primary structure comprises 185 residues: Homeobox protein TGIF2LY (185 aa).

Disordered regions lie at residues 1-58 (MEAA…GNLP) and 166-185 (RCQE…SSPE). Residues 21-39 (AKTQSPAQDTSIMSRNNAD) show a composition bias toward polar residues. Positions 48-111 (EHKKKRKGNL…INARRRILPD (64 aa)) form a DNA-binding region, homeobox; TALE-type.

Belongs to the TALE/TGIF homeobox family. In terms of tissue distribution, specifically expressed in adult testis.

Its subcellular location is the nucleus. In terms of biological role, may have a transcription role in testis. May act as a competitor/regulator of TGIF2LX. This is Homeobox protein TGIF2LY (TGIF2LY) from Homo sapiens (Human).